Reading from the N-terminus, the 338-residue chain is Beta-ketoacyl-[acyl-carrier-protein] synthase III (338 aa).

Residues cysteine 119 and histidine 261 contribute to the active site. Residues 262–266 (QANQR) are ACP-binding. Asparagine 291 is an active-site residue.

It belongs to the thiolase-like superfamily. FabH family. Homodimer.

The protein localises to the cytoplasm. The enzyme catalyses malonyl-[ACP] + acetyl-CoA + H(+) = 3-oxobutanoyl-[ACP] + CO2 + CoA. The protein operates within lipid metabolism; fatty acid biosynthesis. Catalyzes the condensation reaction of fatty acid synthesis by the addition to an acyl acceptor of two carbons from malonyl-ACP. Catalyzes the first condensation reaction which initiates fatty acid synthesis and may therefore play a role in governing the total rate of fatty acid production. Possesses both acetoacetyl-ACP synthase and acetyl transacylase activities. Its substrate specificity determines the biosynthesis of branched-chain and/or straight-chain of fatty acids. This chain is Beta-ketoacyl-[acyl-carrier-protein] synthase III, found in Prochlorococcus marinus (strain SARG / CCMP1375 / SS120).